A 2212-amino-acid chain; its full sequence is RNA-directed RNA polymerase L (2212 aa).

The endonuclease stretch occupies residues 30-288 (KDALLSQVHP…SHEENDSLDC (259 aa)). Positions 55, 93, and 106 each coordinate Mn(2+). Residue K119 is part of the active site. The segment at 922 to 942 (MKSSDAREERLQDPKRNEKNA) is disordered. The span at 923–942 (KSSDAREERLQDPKRNEKNA) shows a compositional bias: basic and acidic residues. The RdRp catalytic domain maps to 1175–1371 (CDMKMAVNNG…YLSSKLNKFV (197 aa)). D1333 contributes to the Mg(2+) binding site.

Belongs to the Bunyavirales RNA polymerase family. In terms of assembly, homomultimer; the oligomeric structure is essential for the polymerase activity. Interacts with nucleoprotein N. Interacts with protein Z; this interaction inhibits viral transcription and replication, Z partially blocks the product exit tunnel for the releasing nascent RNA product. Requires Mn(2+) as cofactor. It depends on Mg(2+) as a cofactor.

Its subcellular location is the virion. The protein resides in the host cytoplasm. It catalyses the reaction RNA(n) + a ribonucleoside 5'-triphosphate = RNA(n+1) + diphosphate. In terms of biological role, RNA-dependent RNA polymerase, which is responsible for the replication and transcription of the viral RNA genome using antigenomic RNA as an intermediate. During transcription, synthesizes subgenomic RNAs and assures their capping by a cap-snatching mechanism, which involves the endonuclease activity cleaving the host capped pre-mRNAs. These short capped RNAs are then used as primers for viral transcription. The 3'-end of subgenomic mRNAs molecules are heterogeneous and not polyadenylated. The replicase function is to direct synthesis of antigenomic and genomic RNA which are encapsidated and non capped. As a consequence of the use of the same enzyme for both transcription and replication, these mechanisms need to be well coordinated. These processes may be regulated by proteins N and Z in a dose-dependent manner. Z protein inhibits the viral polymerase L und thus the viral transcription and RNA synthesis. The protein is RNA-directed RNA polymerase L of Sabia mammarenavirus (isolate Human/Brasil/SPH114202/1990) (SABV).